Reading from the N-terminus, the 228-residue chain is Triosephosphate isomerase (228 aa).

9 to 11 (NFK) serves as a coordination point for substrate. Residue His-93 is the Electrophile of the active site. Glu-141 serves as the catalytic Proton acceptor. Residues Ile-146, Gly-180, and 201–202 (AS) each bind substrate.

The protein belongs to the triosephosphate isomerase family. As to quaternary structure, homotetramer; dimer of dimers.

It localises to the cytoplasm. It carries out the reaction D-glyceraldehyde 3-phosphate = dihydroxyacetone phosphate. Its pathway is carbohydrate biosynthesis; gluconeogenesis. It participates in carbohydrate degradation; glycolysis; D-glyceraldehyde 3-phosphate from glycerone phosphate: step 1/1. Functionally, involved in the gluconeogenesis. Catalyzes stereospecifically the conversion of dihydroxyacetone phosphate (DHAP) to D-glyceraldehyde-3-phosphate (G3P). The chain is Triosephosphate isomerase from Metallosphaera sedula (strain ATCC 51363 / DSM 5348 / JCM 9185 / NBRC 15509 / TH2).